A 172-amino-acid polypeptide reads, in one-letter code: 3-hydroxydecanoyl-[acyl-carrier-protein] dehydratase (172 aa).

The active site involves histidine 71.

Belongs to the thioester dehydratase family. FabA subfamily. Homodimer.

It is found in the cytoplasm. It catalyses the reaction a (3R)-hydroxyacyl-[ACP] = a (2E)-enoyl-[ACP] + H2O. The catalysed reaction is (3R)-hydroxydecanoyl-[ACP] = (2E)-decenoyl-[ACP] + H2O. It carries out the reaction (2E)-decenoyl-[ACP] = (3Z)-decenoyl-[ACP]. It functions in the pathway lipid metabolism; fatty acid biosynthesis. Its function is as follows. Necessary for the introduction of cis unsaturation into fatty acids. Catalyzes the dehydration of (3R)-3-hydroxydecanoyl-ACP to E-(2)-decenoyl-ACP and then its isomerization to Z-(3)-decenoyl-ACP. Can catalyze the dehydratase reaction for beta-hydroxyacyl-ACPs with saturated chain lengths up to 16:0, being most active on intermediate chain length. This Vibrio vulnificus (strain CMCP6) protein is 3-hydroxydecanoyl-[acyl-carrier-protein] dehydratase.